A 335-amino-acid polypeptide reads, in one-letter code: Tetraacyldisaccharide 4'-kinase (335 aa).

58-65 (TVGGSGKT) lines the ATP pocket.

This sequence belongs to the LpxK family.

The catalysed reaction is a lipid A disaccharide + ATP = a lipid IVA + ADP + H(+). It functions in the pathway glycolipid biosynthesis; lipid IV(A) biosynthesis; lipid IV(A) from (3R)-3-hydroxytetradecanoyl-[acyl-carrier-protein] and UDP-N-acetyl-alpha-D-glucosamine: step 6/6. Transfers the gamma-phosphate of ATP to the 4'-position of a tetraacyldisaccharide 1-phosphate intermediate (termed DS-1-P) to form tetraacyldisaccharide 1,4'-bis-phosphate (lipid IVA). The protein is Tetraacyldisaccharide 4'-kinase of Shewanella oneidensis (strain ATCC 700550 / JCM 31522 / CIP 106686 / LMG 19005 / NCIMB 14063 / MR-1).